The chain runs to 698 residues: Polyribonucleotide nucleotidyltransferase (698 aa).

Residues aspartate 485 and aspartate 491 each coordinate Mg(2+). The KH domain maps to 552–611 (PRITTIKINPEKIRDVIGKGGAVIRALTEETGTTIELDDNGTVKIASSNGEATKEAIRRI). An S1 motif domain is found at 621–689 (GRIYNGKVIR…RQGRVRLSIK (69 aa)).

This sequence belongs to the polyribonucleotide nucleotidyltransferase family. As to quaternary structure, component of the RNA degradosome, which is a multiprotein complex involved in RNA processing and mRNA degradation. Mg(2+) serves as cofactor.

It localises to the cytoplasm. The catalysed reaction is RNA(n+1) + phosphate = RNA(n) + a ribonucleoside 5'-diphosphate. Involved in mRNA degradation. Catalyzes the phosphorolysis of single-stranded polyribonucleotides processively in the 3'- to 5'-direction. This Shewanella frigidimarina (strain NCIMB 400) protein is Polyribonucleotide nucleotidyltransferase.